A 48-amino-acid chain; its full sequence is M-oxotoxin-Ot1b (48 aa).

The protein localises to the secreted. Its subcellular location is the target cell membrane. Disrupts cell membranes, particularly those rich in phosphocholine, through formation of pores. Has antimicrobial activity, hemolytic activity and insecticidal activity. This chain is M-oxotoxin-Ot1b, found in Oxyopes takobius (Lynx spider).